A 309-amino-acid chain; its full sequence is HPr kinase/phosphorylase (309 aa).

Residues H138 and K159 contribute to the active site. Residue 153–160 (GKSGVGKS) coordinates ATP. Residue S160 coordinates Mg(2+). Residue D177 is the Proton acceptor; for phosphorylation activity. Proton donor; for dephosphorylation activity of the active site. The tract at residues 201 to 210 (LEIRGLGIIN) is important for the catalytic mechanism of both phosphorylation and dephosphorylation. Residue E202 participates in Mg(2+) binding. The active site involves R243. Positions 264 to 269 (PVRPGR) are important for the catalytic mechanism of dephosphorylation.

Belongs to the HPrK/P family. Homohexamer. Mg(2+) is required as a cofactor.

It carries out the reaction [HPr protein]-L-serine + ATP = [HPr protein]-O-phospho-L-serine + ADP + H(+). It catalyses the reaction [HPr protein]-O-phospho-L-serine + phosphate + H(+) = [HPr protein]-L-serine + diphosphate. Functionally, catalyzes the ATP- as well as the pyrophosphate-dependent phosphorylation of a specific serine residue in HPr, a phosphocarrier protein of the phosphoenolpyruvate-dependent sugar phosphotransferase system (PTS). HprK/P also catalyzes the pyrophosphate-producing, inorganic phosphate-dependent dephosphorylation (phosphorolysis) of seryl-phosphorylated HPr (P-Ser-HPr). The two antagonistic activities of HprK/P are regulated by several intracellular metabolites, which change their concentration in response to the absence or presence of rapidly metabolisable carbon sources (glucose, fructose, etc.) in the growth medium. Also phosphorylates/dephosphorylates the HPr-like catabolite repression protein crh on a specific serine residue. Therefore, by controlling the phosphorylation state of HPr and crh, HPrK/P is a sensor enzyme that plays a major role in the regulation of carbon metabolism and sugar transport: it mediates carbon catabolite repression (CCR), and regulates PTS-catalyzed carbohydrate uptake and inducer exclusion. The polypeptide is HPr kinase/phosphorylase (Geobacillus thermodenitrificans (strain NG80-2)).